The sequence spans 99 residues: DNA-directed RNA polymerase subunit Rpo11 (99 aa).

Belongs to the archaeal Rpo11/eukaryotic RPB11/RPC19 RNA polymerase subunit family. Part of the RNA polymerase complex. Forms an Rpo3-Rpo10-Rpo11-Rpo12 complex upon coexpression.

The protein resides in the cytoplasm. It catalyses the reaction RNA(n) + a ribonucleoside 5'-triphosphate = RNA(n+1) + diphosphate. Its function is as follows. DNA-dependent RNA polymerase (RNAP) catalyzes the transcription of DNA into RNA using the four ribonucleoside triphosphates as substrates. The protein is DNA-directed RNA polymerase subunit Rpo11 of Methanocaldococcus jannaschii (strain ATCC 43067 / DSM 2661 / JAL-1 / JCM 10045 / NBRC 100440) (Methanococcus jannaschii).